The following is a 150-amino-acid chain: Ribosome-binding factor A (150 aa).

A disordered region spans residues 131–150 (LSHDDDEDGGADEAPRNGDE).

This sequence belongs to the RbfA family. Monomer. Binds 30S ribosomal subunits, but not 50S ribosomal subunits or 70S ribosomes.

Its subcellular location is the cytoplasm. One of several proteins that assist in the late maturation steps of the functional core of the 30S ribosomal subunit. Associates with free 30S ribosomal subunits (but not with 30S subunits that are part of 70S ribosomes or polysomes). Required for efficient processing of 16S rRNA. May interact with the 5'-terminal helix region of 16S rRNA. The sequence is that of Ribosome-binding factor A from Brucella melitensis biotype 2 (strain ATCC 23457).